The sequence spans 291 residues: Protease HtpX (291 aa).

2 helical membrane passes run I4 to F24 and I32 to L52. H139 serves as a coordination point for Zn(2+). E140 is a catalytic residue. Residue H143 participates in Zn(2+) binding. The next 2 membrane-spanning stretches (helical) occupy residues I158–L178 and W192–I212. A Zn(2+)-binding site is contributed by E221.

The protein belongs to the peptidase M48B family. Zn(2+) is required as a cofactor.

Its subcellular location is the cell membrane. In Buchnera aphidicola subsp. Baizongia pistaciae (strain Bp), this protein is Protease HtpX.